A 313-amino-acid chain; its full sequence is MPTPKAFALLGPTAGGKTALALKIAETLPVEIISLDSALVYRDMDIGTAKPSASERAFVPHHLIDIITPVQTYSAARFVEDCTRLIGEITARGKYPLIVGGTMMYFRALTQGLNDLPEADACLRADLDEQKQMYGLDFLYRTLQQVDPETACRLKPNDSQRIGRALEVYYLTGKPMSEHLGRQSPHTLPFDLHTAALIPENRARLHENIALRFHLMLEQGFIGEVENLRRRYPSLTADSPAIRCVGYRQAWEYLDGATDRQTFIEKGIAATRQLAKRQLTWLRKTPLDCVADPFSDGTSCTRLIEAAKRFFGV.

Residue 11–18 (GPTAGGKT) coordinates ATP. 13-18 (TAGGKT) serves as a coordination point for substrate. Interaction with substrate tRNA stretches follow at residues 36–39 (DSAL), 160–164 (QRIGR), and 243–248 (RCVGYR).

The protein belongs to the IPP transferase family. In terms of assembly, monomer. Mg(2+) is required as a cofactor.

It catalyses the reaction adenosine(37) in tRNA + dimethylallyl diphosphate = N(6)-dimethylallyladenosine(37) in tRNA + diphosphate. In terms of biological role, catalyzes the transfer of a dimethylallyl group onto the adenine at position 37 in tRNAs that read codons beginning with uridine, leading to the formation of N6-(dimethylallyl)adenosine (i(6)A). This Neisseria meningitidis serogroup A / serotype 4A (strain DSM 15465 / Z2491) protein is tRNA dimethylallyltransferase.